We begin with the raw amino-acid sequence, 174 residues long: uncharacterized protein (174 aa).

Residues 137-174 (TNVTLGDDTPKSYDAPVSAIPPPATATTANATGVKPLE) are disordered.

This is an uncharacterized protein from Acanthamoeba polyphaga (Amoeba).